A 264-amino-acid chain; its full sequence is Cytosolic Fe-S cluster assembly factor Nubp2 homolog (264 aa).

14 to 21 (GKGGVGKS) contributes to the ATP binding site. Cysteine 188 and cysteine 191 together coordinate [4Fe-4S] cluster.

It belongs to the Mrp/NBP35 ATP-binding proteins family. NUBP2/CFD1 subfamily. In terms of assembly, heterotetramer of 2 Nubp1 and 2 Nubp2 chains. The cofactor is [4Fe-4S] cluster.

It localises to the cytoplasm. Component of the cytosolic iron-sulfur (Fe/S) protein assembly (CIA) machinery. Required for maturation of extramitochondrial Fe-S proteins. The Nubp1-Nubp2 heterotetramer forms a Fe-S scaffold complex, mediating the de novo assembly of an Fe-S cluster and its transfer to target apoproteins. This Drosophila grimshawi (Hawaiian fruit fly) protein is Cytosolic Fe-S cluster assembly factor Nubp2 homolog.